Consider the following 195-residue polypeptide: UPF0314 protein RHECIAT_CH0004233 (195 aa).

4 consecutive transmembrane segments (helical) span residues Phe-15 to Gly-35, Trp-64 to Leu-84, Gly-127 to Ala-147, and Ala-150 to Ile-170.

It belongs to the UPF0314 family.

The protein resides in the cell membrane. This is UPF0314 protein RHECIAT_CH0004233 from Rhizobium etli (strain CIAT 652).